A 257-amino-acid polypeptide reads, in one-letter code: Protein LigF (257 aa).

The GST N-terminal domain maps to 1–82; it reads MTLKLYSFGP…YLEDVFPESG (82 aa). The 169-residue stretch at 89–257 folds into the GST C-terminal domain; the sequence is DPFKRAEMRV…LLKRQNEKVA (169 aa).

The protein belongs to the GST superfamily.

In terms of biological role, lignin degradation enzyme. In Sphingobium sp. (strain NBRC 103272 / SYK-6), this protein is Protein LigF (ligF).